Reading from the N-terminus, the 85-residue chain is High affinity immunoglobulin epsilon receptor subunit gamma (85 aa).

The N-terminal stretch at 1 to 18 (MIPAVVLLLLLLVEQAAA) is a signal peptide. Over 19 to 23 (LGEPQ) the chain is Extracellular. Residues 24–44 (LCYILDAILFLYGIVLTLLYC) traverse the membrane as a helical segment. Over 45 to 85 (RLKLQVRKAATASEKSDGIYTGLSTRTQETYETLKHEKPPQ) the chain is Cytoplasmic. The region spanning 53-81 (AATASEKSDGIYTGLSTRTQETYETLKHE) is the ITAM domain. At tyrosine 64 the chain carries Phosphotyrosine. Serine 68 carries the phosphoserine modification. At tyrosine 75 the chain carries Phosphotyrosine. Position 77 is a phosphothreonine (threonine 77).

It belongs to the CD3Z/FCER1G family. As to quaternary structure, igE Fc receptor is a tetramer of an alpha chain, a beta chain, and two disulfide linked gamma chains. Associates with FCGR1A; forms a functional signaling complex. The signaling subunit of immunoglobulin gamma (IgG) Fc receptor complex. As a homodimer or a heterodimer of CD247 and FCER1G, associates with the ligand binding subunit FCGR3A to form a functional receptor complex. Associates with CLEC6A. Interacts with CLEC4E. Interacts (via ITAM domain) with SYK (via SH2 domains); activates SYK, enabling integrin-mediated activation of neutrophils and macrophages. Interacts with CSF2RB and recruits SYK in response to IL3 stimulation; this interaction is direct. Interacts with CD300LH; the interaction may be indirect. Interacts with CD300LD. Interacts with TARM1.

Its subcellular location is the cell membrane. Adapter protein containing an immunoreceptor tyrosine-based activation motif (ITAM) that transduces activation signals from various immunoreceptors. As a component of the high-affinity immunoglobulin E (IgE) receptor, mediates allergic inflammatory signaling in mast cells. As a constitutive component of interleukin-3 receptor complex, selectively mediates interleukin 4/IL4 production by basophils priming T-cells toward effector T-helper 2 subset. Associates with pattern recognition receptors CLEC4D and CLEC4E to form a functional signaling complex in myeloid cells. Binding of mycobacterial trehalose 6,6'-dimycolate (TDM) to this receptor complex leads to phosphorylation of ITAM, triggering activation of SYK, CARD9 and NF-kappa-B, consequently driving maturation of antigen-presenting cells and shaping antigen-specific priming of T-cells toward effector T-helper 1 and T-helper 17 cell subtypes. May function cooperatively with other activating receptors. Functionally linked to integrin beta-2/ITGB2-mediated neutrophil activation. Also involved in integrin alpha-2/ITGA2-mediated platelet activation. The protein is High affinity immunoglobulin epsilon receptor subunit gamma (FCER1G) of Bos taurus (Bovine).